The sequence spans 201 residues: Large ribosomal subunit protein eL15 (201 aa).

The protein belongs to the eukaryotic ribosomal protein eL15 family.

The polypeptide is Large ribosomal subunit protein eL15 (RPL15) (Quercus suber (Cork oak)).